Reading from the N-terminus, the 141-residue chain is Hemoglobin subunit alpha-1/2 (141 aa).

The Globin domain maps to valine 1–arginine 141. Residue serine 3 is modified to Phosphoserine. Lysine 7 bears the N6-succinyllysine mark. Threonine 8 carries the phosphothreonine modification. Position 11 is an N6-succinyllysine (lysine 11). Lysine 16 is modified (N6-acetyllysine; alternate). Lysine 16 carries the N6-succinyllysine; alternate modification. Tyrosine 24 bears the Phosphotyrosine mark. Position 35 is a phosphoserine (serine 35). N6-succinyllysine is present on lysine 40. At serine 49 the chain carries Phosphoserine. An O2-binding site is contributed by histidine 58. Residue histidine 87 participates in heme b binding. A Phosphoserine modification is found at serine 102. Threonine 108 bears the Phosphothreonine mark. Phosphoserine is present on serine 124. Residues threonine 134 and threonine 137 each carry the phosphothreonine modification. At serine 138 the chain carries Phosphoserine.

Belongs to the globin family. As to quaternary structure, heterotetramer of two alpha chains and two beta chains. Red blood cells.

In terms of biological role, involved in oxygen transport from the lung to the various peripheral tissues. The polypeptide is Hemoglobin subunit alpha-1/2 (Mustela lutreola (European mink)).